Reading from the N-terminus, the 311-residue chain is Methionyl-tRNA formyltransferase (311 aa).

A (6S)-5,6,7,8-tetrahydrofolate-binding site is contributed by 110–113; the sequence is SLLP.

This sequence belongs to the Fmt family.

The enzyme catalyses L-methionyl-tRNA(fMet) + (6R)-10-formyltetrahydrofolate = N-formyl-L-methionyl-tRNA(fMet) + (6S)-5,6,7,8-tetrahydrofolate + H(+). Attaches a formyl group to the free amino group of methionyl-tRNA(fMet). The formyl group appears to play a dual role in the initiator identity of N-formylmethionyl-tRNA by promoting its recognition by IF2 and preventing the misappropriation of this tRNA by the elongation apparatus. This Streptococcus mutans serotype c (strain ATCC 700610 / UA159) protein is Methionyl-tRNA formyltransferase.